Here is a 222-residue protein sequence, read N- to C-terminus: Uridine kinase (222 aa).

13-20 (GGSGAGKT) contributes to the ATP binding site.

Belongs to the uridine kinase family.

The protein resides in the cytoplasm. It catalyses the reaction uridine + ATP = UMP + ADP + H(+). The enzyme catalyses cytidine + ATP = CMP + ADP + H(+). It functions in the pathway pyrimidine metabolism; CTP biosynthesis via salvage pathway; CTP from cytidine: step 1/3. Its pathway is pyrimidine metabolism; UMP biosynthesis via salvage pathway; UMP from uridine: step 1/1. The protein is Uridine kinase of Chlamydia pneumoniae (Chlamydophila pneumoniae).